The following is a 486-amino-acid chain: Serine/threonine-protein kinase 33 (486 aa).

A disordered region spans residues 39–100 (VVEMSQTSST…WGRGNFTEGK (62 aa)). Residues 41–53 (EMSQTSSTGSSEF) show a composition bias toward polar residues. Over residues 57-66 (PEKRKEKGAS) the composition is skewed to basic and acidic residues. The segment covering 68–80 (DVTSGKDSPSKSS) has biased composition (polar residues). The region spanning 116 to 381 (YTFGRILGQG…AKELLDNQWL (266 aa)) is the Protein kinase domain. ATP is bound by residues 122–130 (LGQGSFGMV) and Lys145. The Proton acceptor role is filled by Asp238. The segment at 402–451 (KNNPESDEESTTDQRDSRSGQEESKVYQPSRNVPDVSNSSDEEEGKQVGR) is disordered. Phosphoserine is present on Ser407. Basic and acidic residues predominate over residues 413–426 (TDQRDSRSGQEESK). The segment covering 428-440 (YQPSRNVPDVSNS) has biased composition (polar residues).

Belongs to the protein kinase superfamily. CAMK Ser/Thr protein kinase family. CaMK subfamily. Interacts with vimentin/VIM. Autophosphorylated.

It is found in the cytoplasm. The protein resides in the perinuclear region. It carries out the reaction L-seryl-[protein] + ATP = O-phospho-L-seryl-[protein] + ADP + H(+). The catalysed reaction is L-threonyl-[protein] + ATP = O-phospho-L-threonyl-[protein] + ADP + H(+). Its function is as follows. Serine/threonine protein kinase which phosphorylates vimentin/VIM. Therefore may play a specific role in the dynamic behavior of the intermediate filament cytoskeleton. This is Serine/threonine-protein kinase 33 (STK33) from Bos taurus (Bovine).